The following is a 120-amino-acid chain: Large ribosomal subunit protein bL12 (120 aa).

The protein belongs to the bacterial ribosomal protein bL12 family. As to quaternary structure, homodimer. Part of the ribosomal stalk of the 50S ribosomal subunit. Forms a multimeric L10(L12)X complex, where L10 forms an elongated spine to which 2 to 4 L12 dimers bind in a sequential fashion. Binds GTP-bound translation factors.

In terms of biological role, forms part of the ribosomal stalk which helps the ribosome interact with GTP-bound translation factors. Is thus essential for accurate translation. This Aeromonas salmonicida (strain A449) protein is Large ribosomal subunit protein bL12.